The primary structure comprises 326 residues: Transposase InsH for insertion sequence element IS5Y (326 aa).

It belongs to the transposase 11 family.

Its function is as follows. Involved in the transposition of the insertion sequence IS5. The protein is Transposase InsH for insertion sequence element IS5Y (insH5) of Escherichia coli (strain K12).